Consider the following 1050-residue polypeptide: Atrial natriuretic peptide receptor 2 (1050 aa).

Residues 1–19 form the signal peptide; the sequence is MDLGHSLFVVFTCFLMARC. The Extracellular portion of the chain corresponds to 20–460; the sequence is RTEIGKNITV…FCNEDQLPVL (441 aa). Residues Asn-26 and Asn-74 are each glycosylated (N-linked (GlcNAc...) asparagine). A disulfide bridge connects residues Cys-84 and Cys-110. Asn-169, Asn-203, Asn-285, Asn-352, Asn-366, and Asn-415 each carry an N-linked (GlcNAc...) asparagine glycan. Cys-236 and Cys-339 are disulfide-bonded. The chain crosses the membrane as a helical span at residues 461 to 481; it reads GIVAVGSGLALIIFGISSFLI. The Cytoplasmic segment spans residues 482–1050; it reads YRKLKLEKEL…LGEKTDVYVI (569 aa). In terms of domain architecture, Protein kinase spans 517 to 790; sequence SRLTISQRGS…PDFSYIKIFV (274 aa). Residues 865 to 995 enclose the Guanylate cyclase domain; the sequence is TIYFSDIVGF…DTVNTASRME (131 aa).

The protein belongs to the adenylyl cyclase class-4/guanylyl cyclase family. Phosphorylated. Phosphorylation of the protein kinase-like domain is required for full activation by CNP. In terms of processing, glycosylated. As to expression, high levels found in liver, atrium and gill. Moderate levels found in brain and ventricle, and low levels in esophageal sphincter, stomach, posterior intestine and kidney.

The protein resides in the cell membrane. It carries out the reaction GTP = 3',5'-cyclic GMP + diphosphate. Receptor for the C-type natriuretic peptide NPPC/CNP hormone. Has guanylate cyclase activity upon binding of its ligand. May play a role in the regulation of skeletal growth. This is Atrial natriuretic peptide receptor 2 (npr2) from Anguilla japonica (Japanese eel).